Reading from the N-terminus, the 182-residue chain is uncharacterized protein (182 aa).

2 disordered regions span residues 17 to 53 (AVSQAQGRPGHPDAPPNIYEGGLGSPQPQCPSAQGSK) and 128 to 159 (DSLGSSASSSSMDPDKGALPQPSPSRLRPKRS). Residues 42-53 (PQPQCPSAQGSK) show a composition bias toward polar residues. Over residues 129–138 (SLGSSASSSS) the composition is skewed to low complexity.

This is an uncharacterized protein from Homo sapiens (Human).